Consider the following 195-residue polypeptide: GTP cyclohydrolase 1 (195 aa).

The Zn(2+) site is built by C86, H89, and C158.

This sequence belongs to the GTP cyclohydrolase I family. Homomer.

It carries out the reaction GTP + H2O = 7,8-dihydroneopterin 3'-triphosphate + formate + H(+). It participates in cofactor biosynthesis; 7,8-dihydroneopterin triphosphate biosynthesis; 7,8-dihydroneopterin triphosphate from GTP: step 1/1. The chain is GTP cyclohydrolase 1 from Ruminiclostridium cellulolyticum (strain ATCC 35319 / DSM 5812 / JCM 6584 / H10) (Clostridium cellulolyticum).